The following is a 673-amino-acid chain: DNA topoisomerase 1 (673 aa).

The region spanning Met-1–Ala-134 is the Toprim domain. Residues Glu-4 and Asp-103 each contribute to the Mg(2+) site. One can recognise a Topo IA-type catalytic domain in the interval Asp-149–Leu-568. The segment at Ser-189–Gln-194 is interaction with DNA. Tyr-311 (O-(5'-phospho-DNA)-tyrosine intermediate) is an active-site residue. Positions Leu-352–Pro-374 are disordered. The segment at Cys-595–His-615 adopts a C4-type zinc-finger fold.

The protein belongs to the type IA topoisomerase family. As to quaternary structure, monomer. Requires Mg(2+) as cofactor.

It carries out the reaction ATP-independent breakage of single-stranded DNA, followed by passage and rejoining.. Functionally, releases the supercoiling and torsional tension of DNA, which is introduced during the DNA replication and transcription, by transiently cleaving and rejoining one strand of the DNA duplex. Introduces a single-strand break via transesterification at a target site in duplex DNA. The scissile phosphodiester is attacked by the catalytic tyrosine of the enzyme, resulting in the formation of a DNA-(5'-phosphotyrosyl)-enzyme intermediate and the expulsion of a 3'-OH DNA strand. The free DNA strand then undergoes passage around the unbroken strand, thus removing DNA supercoils. Finally, in the religation step, the DNA 3'-OH attacks the covalent intermediate to expel the active-site tyrosine and restore the DNA phosphodiester backbone. This chain is DNA topoisomerase 1, found in Aeropyrum pernix (strain ATCC 700893 / DSM 11879 / JCM 9820 / NBRC 100138 / K1).